Reading from the N-terminus, the 382-residue chain is MTHKKQKKEMSDSEKKTFNEDSKHSILAVDLVRLILERLSFVDFHRARCVSSIWYIASKTVIGVTNPTTPWLILFPKGDVEIKKDSCKLYDPHENKTYIVRDLGFDLVTSRCLASSGSWFLMLDHRTEFHLLNLFTRVRIPLPSLESTRGSDIKIGNAVLWVDEQRKDYLVVWNISSLFGYHKKGDDRWKVFKPLENERCIIAMVFKENKLYVLSVDGNVDVFYFSGNDSPVRCATLPSSPLRKGHKVVVTLSGEVLIIVAKVEPYPRTRLCFFAVYKMDPKSSRWETIKSLAGEALILDLGITVEAKVMKNCIYFSNDQFHRYNENSLWNVSNKSGVFVYHFRSANVVQLVELLTASSRTSKILFKDARCFFPTFTSKWLL.

The 48-residue stretch at 22–69 (SKHSILAVDLVRLILERLSFVDFHRARCVSSIWYIASKTVIGVTNPTT) folds into the F-box domain. 3 Kelch repeats span residues 73–117 (ILFP…ASSG), 159–209 (VLWV…FKEN), and 259–306 (IVAK…ITVE).

In terms of assembly, part of a SCF (SKP1-cullin-F-box) protein ligase complex. Binds directly to several GSK3 family proteins such as SKP1A/ASK1, ASK1/SK11, ASK3/SK12, ASK5/SK13, ASK7/BIN2/SK21, ASK9/SK22 and ASK6/SK23. Interacts with ASK7/BIN2/SK21 in a brassinosteroid (BR)-dependent manner. As to expression, expressed in seedlings, leaves, stems, flower buds and flowers.

The protein localises to the cytoplasm. It localises to the nucleus. The protein resides in the nucleolus. Component of SCF(ASK-cullin-F-box) E3 ubiquitin ligase complexes, which may mediate the ubiquitination and subsequent proteasomal degradation of target proteins. Required for brassinosteroid (BR) signal transduction. Mediates ASK7/BIN2/SK21 inactivation both by competing with substrate binding (e.g. BZR1) and by promoting its ubiquitination and subsequent proteasomal degradation. This Arabidopsis thaliana (Mouse-ear cress) protein is F-box/kelch-repeat protein KIB1.